Reading from the N-terminus, the 289-residue chain is MDKILLGCHVSMNKQNNYLVGSVNEAISYKANTFMIFTGPPQSTLRTNTNHLYINQMHELMNSYKIDAKDLVVHAPYIINIANSVDQNKWKFTVDFLIQEIKRCEEIKIPTLVLHPGSYTTGNYKDSLNQIIKALNIVSNYQVNVKIALETMSGKGTEVCSRLEDFKYILDNVKNKDKVGVCLDTCHLHDAGYDLSKWTEFKEQMKQNFSLDKVLCIHLNDSKNMISSHKDRHANIGYGYVGFDTLVNVVFDKDFSNISKILETPYIDKTPPYKIEIEDLLNKTFTNRL.

Residues His-74, His-115, Glu-150, Asp-184, His-187, His-218, Asp-231, His-233, and Glu-263 each coordinate Zn(2+).

The protein belongs to the AP endonuclease 2 family. It depends on Zn(2+) as a cofactor.

It catalyses the reaction Endonucleolytic cleavage to 5'-phosphooligonucleotide end-products.. In terms of biological role, endonuclease IV plays a role in DNA repair. It cleaves phosphodiester bonds at apurinic or apyrimidinic (AP) sites, generating a 3'-hydroxyl group and a 5'-terminal sugar phosphate. The protein is Probable endonuclease 4 of Mycoplasma mycoides subsp. mycoides SC (strain CCUG 32753 / NCTC 10114 / PG1).